Consider the following 339-residue polypeptide: Putative ABC transporter ATP-binding protein MG467 homolog (339 aa).

Positions 41–87 are disordered; the sequence is KKTKKAKPAKVKKVKEPKAKAVKPEQVKPTKTTKAPKPKKPKKQGGL. Basic residues predominate over residues 42 to 53; that stretch reads KTKKAKPAKVKK. Residues 54-68 show a composition bias toward basic and acidic residues; that stretch reads VKEPKAKAVKPEQVK. Residues 74–83 show a composition bias toward basic residues; that stretch reads KAPKPKKPKK. Positions 112 to 338 constitute an ABC transporter domain; it reads ISIDKMWKHV…IVSNELVRPL (227 aa). 150–157 contributes to the ATP binding site; it reads GPSGSGKT.

The protein belongs to the ABC transporter superfamily.

In Mycoplasma pneumoniae (strain ATCC 29342 / M129 / Subtype 1) (Mycoplasmoides pneumoniae), this protein is Putative ABC transporter ATP-binding protein MG467 homolog.